The chain runs to 654 residues: Carboxypeptidase Z (654 aa).

Residues 1–20 (MPTMPLLLAALAALAVLALA) form the signal peptide. One can recognise an FZ domain in the interval 43–165 (THSATCVDLH…APEEEGCYDP (123 aa)). Cystine bridges form between Cys-48–Cys-114, Cys-56–Cys-107, Cys-98–Cys-134, Cys-123–Cys-162, and Cys-127–Cys-151. Asn-62 is a glycosylation site (N-linked (GlcNAc...) asparagine). In terms of domain architecture, Peptidase M14 spans 191–507 (AHHSYAQMVR…EPLLNFLEMV (317 aa)). Zn(2+) is bound by residues His-253 and Glu-256. The N-linked (GlcNAc...) asparagine glycan is linked to Asn-286. His-385 is a binding site for Zn(2+). Glu-477 (proton donor/acceptor) is an active-site residue. The tract at residues 596–630 (FLPGPSRALPRFQDPQREPTQMDFEPPRARRQPAS) is disordered.

It belongs to the peptidase M14 family. Zn(2+) serves as cofactor.

The protein resides in the secreted. The protein localises to the extracellular space. Its subcellular location is the extracellular matrix. Its activity is regulated as follows. Inhibited by 2-mercaptomethyl-3-guanidinoethylthiopropanoic acid (MGTA) and guanidinoethylmercaptosuccinic acid (GEMSA). Inhibited by chelating agents such as EDTA and EGTA. Cleaves substrates with C-terminal arginine residues. Probably modulates the Wnt signaling pathway, by cleaving some undefined protein. May play a role in cleavage during prohormone processing. The sequence is that of Carboxypeptidase Z (Cpz) from Mus musculus (Mouse).